The sequence spans 421 residues: Imidazolonepropionase (421 aa).

The Fe(3+) site is built by histidine 81 and histidine 83. Zn(2+)-binding residues include histidine 81 and histidine 83. 4-imidazolone-5-propanoate is bound by residues arginine 90, tyrosine 153, and histidine 186. Residue tyrosine 153 participates in N-formimidoyl-L-glutamate binding. Histidine 251 provides a ligand contact to Fe(3+). Histidine 251 is a Zn(2+) binding site. Glutamate 254 lines the 4-imidazolone-5-propanoate pocket. Aspartate 326 contacts Fe(3+). Aspartate 326 contacts Zn(2+). Asparagine 328 and glycine 330 together coordinate N-formimidoyl-L-glutamate. Serine 331 provides a ligand contact to 4-imidazolone-5-propanoate.

Belongs to the metallo-dependent hydrolases superfamily. HutI family. Zn(2+) is required as a cofactor. The cofactor is Fe(3+).

Its subcellular location is the cytoplasm. It carries out the reaction 4-imidazolone-5-propanoate + H2O = N-formimidoyl-L-glutamate. It participates in amino-acid degradation; L-histidine degradation into L-glutamate; N-formimidoyl-L-glutamate from L-histidine: step 3/3. In terms of biological role, catalyzes the hydrolytic cleavage of the carbon-nitrogen bond in imidazolone-5-propanoate to yield N-formimidoyl-L-glutamate. It is the third step in the universal histidine degradation pathway. In Streptococcus pyogenes serotype M3 (strain SSI-1), this protein is Imidazolonepropionase.